We begin with the raw amino-acid sequence, 77 residues long: Acyl carrier protein (77 aa).

A Carrier domain is found at 1-76 (MAVFEDVRDV…DVVNYIEKLG (76 aa)). An O-(pantetheine 4'-phosphoryl)serine modification is found at S36.

This sequence belongs to the acyl carrier protein (ACP) family. 4'-phosphopantetheine is transferred from CoA to a specific serine of apo-ACP by AcpS. This modification is essential for activity because fatty acids are bound in thioester linkage to the sulfhydryl of the prosthetic group.

The protein resides in the cytoplasm. It participates in lipid metabolism; fatty acid biosynthesis. Carrier of the growing fatty acid chain in fatty acid biosynthesis. This is Acyl carrier protein from Campylobacter concisus (strain 13826).